A 140-amino-acid chain; its full sequence is Acyl-coenzyme A thioesterase 13 (140 aa).

The residue at position 1 (Met-1) is an N-acetylmethionine. N6-acetyllysine is present on residues Lys-27, Lys-37, and Lys-43. Position 46 (Glu-46) interacts with CoA. Asn-50 and Gly-81 together coordinate substrate. CoA is bound by residues Ser-83, Tyr-90–Lys-95, and Lys-108–Leu-113. N6-acetyllysine is present on residues Lys-108 and Lys-127. His-137 lines the CoA pocket.

The protein belongs to the thioesterase PaaI family. In terms of assembly, homotetramer. Interacts with PCTP. As to expression, highly expressed in the kidney and moderately in the heart, liver, brain, small and large intestine. Also expressed in brown adipose tissue.

It is found in the cytoplasm. The protein localises to the cytosol. Its subcellular location is the mitochondrion. The protein resides in the nucleus. It localises to the cytoskeleton. It is found in the spindle. The catalysed reaction is a fatty acyl-CoA + H2O = a fatty acid + CoA + H(+). The enzyme catalyses decanoyl-CoA + H2O = decanoate + CoA + H(+). It catalyses the reaction octanoyl-CoA + H2O = octanoate + CoA + H(+). It carries out the reaction butanoyl-CoA + H2O = butanoate + CoA + H(+). The catalysed reaction is hexanoyl-CoA + H2O = hexanoate + CoA + H(+). The enzyme catalyses tetradecanoyl-CoA + H2O = tetradecanoate + CoA + H(+). It catalyses the reaction hexadecanoyl-CoA + H2O = hexadecanoate + CoA + H(+). It carries out the reaction dodecanoyl-CoA + H2O = dodecanoate + CoA + H(+). The catalysed reaction is (9Z)-octadecenoyl-CoA + H2O = (9Z)-octadecenoate + CoA + H(+). Catalyzes the hydrolysis of acyl-CoAs into free fatty acids and coenzyme A (CoASH), regulating their respective intracellular levels. Has acyl-CoA thioesterase activity towards medium (C12) and long-chain (C18) fatty acyl-CoA substrates. Can also hydrolyze 3-hydroxyphenylacetyl-CoA and 3,4-dihydroxyphenylacetyl-CoA (in vitro). May play a role in controlling adaptive thermogenesis. In Mus musculus (Mouse), this protein is Acyl-coenzyme A thioesterase 13.